Reading from the N-terminus, the 133-residue chain is Salivary cystatin-L (133 aa).

The N-terminal stretch at 1–19 is a signal peptide; that stretch reads MTSTFALVLLLGGMAVCVA. The Cystatin domain occupies 30-118; it reads ANHQANPEFL…RTCTTVVFEN (89 aa). 2 cysteine pairs are disulfide-bonded: cysteine 89/cysteine 100 and cysteine 111/cysteine 130.

Belongs to the cystatin family. Monomer. Can form homodimers in vitro, but probably not in vivo. Homodimers are predicted to be inactive; dimerization disrupts the interaction with target proteases. As to expression, detected in saliva (at protein level). Detected in salivary gland and midgut.

The protein localises to the secreted. Contributes to the suppression of the host's immune response to tick salivary proteins and is important for successful feeding on hosts. Inhibitor of cysteine proteinases. Inhibits host papain and cathepsin L (CTSL) (in vitro). Inhibits host cathepsin S (CTSS) (in vitro). Inhibits host CTSV and CTSC, but to a lesser degree (in vitro). Inhibits host immune responses via its inhibition of host cathepsins. Inhibits differentiation of host dendritic cells. Inhibits proliferation of host T-cells in response to antigen stimulus. Down-regulates IL1B production by host mast cells, and this then leads to impaired activation of IL1R1, resulting in decreased IL9 production. Inhibits host inflammatory reactions and recruitment of host neutrophils. Attenuates IFN-beta (IFNB1)-triggered JAK/STAT signaling pathway in mouse dendritic cells. Its function is as follows. (Microbial infection) Down-regulates TLR2-mediated host responses to infection by Borrelia burgdorferi and the production of the chemokine CCL3 by host dendritic cells. Down-regulates host responses to infection by B.burgdorferi and the production of IFNB1 by host dendritic cells. The protein is Salivary cystatin-L of Ixodes scapularis (Black-legged tick).